A 435-amino-acid chain; its full sequence is ATP-dependent protease ATPase subunit HslU (435 aa).

Residues Val18, 60 to 65 (GVGKTE), Asp248, Glu313, and Arg385 each bind ATP.

Belongs to the ClpX chaperone family. HslU subfamily. In terms of assembly, a double ring-shaped homohexamer of HslV is capped on each side by a ring-shaped HslU homohexamer. The assembly of the HslU/HslV complex is dependent on binding of ATP.

Its subcellular location is the cytoplasm. In terms of biological role, ATPase subunit of a proteasome-like degradation complex; this subunit has chaperone activity. The binding of ATP and its subsequent hydrolysis by HslU are essential for unfolding of protein substrates subsequently hydrolyzed by HslV. HslU recognizes the N-terminal part of its protein substrates and unfolds these before they are guided to HslV for hydrolysis. The sequence is that of ATP-dependent protease ATPase subunit HslU from Parvibaculum lavamentivorans (strain DS-1 / DSM 13023 / NCIMB 13966).